Here is a 412-residue protein sequence, read N- to C-terminus: D-xylonate dehydratase (412 aa).

In terms of assembly, homooctamer.

The catalysed reaction is D-xylonate = 2-dehydro-3-deoxy-D-arabinonate + H2O. In terms of biological role, NADP-dependent D-xylose dehydrogenase involved in the degradation of D-xylose, a major component of hemicelluloses such as xylan. Catalyzes the third reaction in the xylose utilization pathway through dehydratation of D-xylonate into 2-dehydro-3-deoxy-D-xylonate. This chain is D-xylonate dehydratase, found in Haloferax volcanii (strain ATCC 29605 / DSM 3757 / JCM 8879 / NBRC 14742 / NCIMB 2012 / VKM B-1768 / DS2) (Halobacterium volcanii).